Consider the following 344-residue polypeptide: Phosphate acyltransferase (344 aa).

It belongs to the PlsX family. Homodimer. Probably interacts with PlsY.

The protein resides in the cytoplasm. The enzyme catalyses a fatty acyl-[ACP] + phosphate = an acyl phosphate + holo-[ACP]. Its pathway is lipid metabolism; phospholipid metabolism. Functionally, catalyzes the reversible formation of acyl-phosphate (acyl-PO(4)) from acyl-[acyl-carrier-protein] (acyl-ACP). This enzyme utilizes acyl-ACP as fatty acyl donor, but not acyl-CoA. The polypeptide is Phosphate acyltransferase (Enterobacter sp. (strain 638)).